We begin with the raw amino-acid sequence, 343 residues long: Flap endonuclease 1 (343 aa).

An N-domain region spans residues 1-98 (MGVPIGDLVP…KELEKRREAR (98 aa)). Mg(2+)-binding residues include D27, D80, E152, E154, D173, D175, and D236. The tract at residues 116-258 (EARKYAQRAT…KALEIVRYSR (143 aa)) is I-domain. Residues 330 to 338 (RQSTLESWF) are interaction with PCNA.

This sequence belongs to the XPG/RAD2 endonuclease family. FEN1 subfamily. As to quaternary structure, interacts with PCNA. PCNA stimulates the nuclease activity without altering cleavage specificity. Mg(2+) is required as a cofactor.

Its function is as follows. Structure-specific nuclease with 5'-flap endonuclease and 5'-3' exonuclease activities involved in DNA replication and repair. During DNA replication, cleaves the 5'-overhanging flap structure that is generated by displacement synthesis when DNA polymerase encounters the 5'-end of a downstream Okazaki fragment. Binds the unpaired 3'-DNA end and kinks the DNA to facilitate 5' cleavage specificity. Cleaves one nucleotide into the double-stranded DNA from the junction in flap DNA, leaving a nick for ligation. Also involved in the base excision repair (BER) pathway. Acts as a genome stabilization factor that prevents flaps from equilibrating into structures that lead to duplications and deletions. Also possesses 5'-3' exonuclease activity on nicked or gapped double-stranded DNA. This Pyrococcus horikoshii (strain ATCC 700860 / DSM 12428 / JCM 9974 / NBRC 100139 / OT-3) protein is Flap endonuclease 1.